A 191-amino-acid chain; its full sequence is dITP/XTP pyrophosphatase (191 aa).

A substrate-binding site is contributed by 8 to 13 (SKNQGK). Mg(2+) is bound by residues Glu-38 and Asp-67. Catalysis depends on Asp-67, which acts as the Proton acceptor. Substrate contacts are provided by residues Ser-68, 146–149 (FGYD), Lys-169, and 174–175 (HR).

The protein belongs to the HAM1 NTPase family. Homodimer. It depends on Mg(2+) as a cofactor.

It carries out the reaction XTP + H2O = XMP + diphosphate + H(+). It catalyses the reaction dITP + H2O = dIMP + diphosphate + H(+). The catalysed reaction is ITP + H2O = IMP + diphosphate + H(+). Functionally, pyrophosphatase that catalyzes the hydrolysis of nucleoside triphosphates to their monophosphate derivatives, with a high preference for the non-canonical purine nucleotides XTP (xanthosine triphosphate), dITP (deoxyinosine triphosphate) and ITP. Seems to function as a house-cleaning enzyme that removes non-canonical purine nucleotides from the nucleotide pool, thus preventing their incorporation into DNA/RNA and avoiding chromosomal lesions. The chain is dITP/XTP pyrophosphatase from Prochlorococcus marinus subsp. pastoris (strain CCMP1986 / NIES-2087 / MED4).